A 5193-amino-acid polypeptide reads, in one-letter code: Usherin (5193 aa).

An N-terminal signal peptide occupies residues 1–34 (MHYLALSPGFLCYTIKTLILAYLASVLVLAASQG). The Extracellular portion of the chain corresponds to 35 to 5033 (VFPRLENVGA…KSTEFYSELW (4999 aa)). 7 N-linked (GlcNAc...) asparagine glycosylation sites follow: asparagine 230, asparagine 258, asparagine 274, asparagine 358, asparagine 415, asparagine 448, and asparagine 469. The Laminin N-terminal domain occupies 268–514 (QDFRLYNVSL…AVDEIIVSGR (247 aa)). Disulfide bonds link cysteine 515-cysteine 524, cysteine 517-cysteine 533, cysteine 535-cysteine 546, cysteine 549-cysteine 569, cysteine 572-cysteine 581, cysteine 574-cysteine 602, cysteine 605-cysteine 614, cysteine 617-cysteine 635, cysteine 638-cysteine 652, cysteine 640-cysteine 659, cysteine 661-cysteine 670, cysteine 673-cysteine 688, cysteine 691-cysteine 705, cysteine 693-cysteine 712, cysteine 714-cysteine 723, cysteine 726-cysteine 741, cysteine 744-cysteine 756, cysteine 746-cysteine 763, cysteine 765-cysteine 774, cysteine 777-cysteine 789, cysteine 792-cysteine 805, cysteine 794-cysteine 812, cysteine 814-cysteine 823, and cysteine 826-cysteine 846. Laminin EGF-like domains follow at residues 515–571 (CQCH…NCKP), 572–637 (CQCH…ACKL), 638–690 (CDCN…GCRP), 691–743 (CNCN…GCEP), 744–791 (CQCN…ACEV), 792–848 (CDCS…NCEK), 853–896 (NGSL…GCQA), 897–947 (CDCD…GCLP), 948–998 (CLCH…RCRP), and 999–1049 (CHCH…GCSK). N-linked (GlcNAc...) asparagine glycosylation is present at asparagine 647. N-linked (GlcNAc...) asparagine glycans are attached at residues asparagine 836 and asparagine 853. Cystine bridges form between cysteine 867/cysteine 876, cysteine 879/cysteine 894, cysteine 897/cysteine 910, cysteine 899/cysteine 917, cysteine 919/cysteine 928, cysteine 931/cysteine 945, cysteine 948/cysteine 960, cysteine 950/cysteine 967, cysteine 969/cysteine 979, cysteine 982/cysteine 996, cysteine 999/cysteine 1011, cysteine 1001/cysteine 1018, cysteine 1020/cysteine 1029, and cysteine 1032/cysteine 1047. The N-linked (GlcNAc...) asparagine glycan is linked to asparagine 885. N-linked (GlcNAc...) asparagine glycosylation occurs at asparagine 941. A glycan (N-linked (GlcNAc...) asparagine) is linked at asparagine 1008. Fibronectin type-III domains lie at 1055–1143 (PPPR…TKPE), 1147–1241 (GHLN…APPQ), 1242–1357 (TQGP…SVPV), 1358–1462 (FMAP…AAPA), and 1463–1566 (QLRP…LQLK). N-linked (GlcNAc...) asparagine glycosylation is found at asparagine 1068, asparagine 1089, asparagine 1150, asparagine 1171, and asparagine 1222. Residues asparagine 1382, asparagine 1473, and asparagine 1626 are each glycosylated (N-linked (GlcNAc...) asparagine). Laminin G-like domains follow at residues 1511–1700 (TKGT…WEGC) and 1705–1882 (EEGV…QDGC). The cysteines at positions 1663 and 1700 are disulfide-linked. N-linked (GlcNAc...) asparagine glycosylation occurs at asparagine 1770. Fibronectin type-III domains are found at residues 1847–1946 (EPGF…TAPQ), 1948–2045 (VPTP…TPQE), 2046–2132 (APQE…TAQL), 2133–2234 (PPEQ…IPEG), 2235–2321 (VPAP…APPE), 2322–2421 (GVVN…SVEM), 2422–2525 (PPGA…DKPG), 2526–2613 (PIDA…TLPG), 2617–2713 (GIPS…TRPC), 2717–2810 (GVQP…THPA), 2811–2914 (PPQE…TLAG), 2918–3009 (RGAT…MWEE), and 3013–3103 (GMLP…TPSD). Cysteine 1853 and cysteine 1882 are disulfide-bonded. N-linked (GlcNAc...) asparagine glycosylation occurs at asparagine 1894. Residues 1931–1955 (VSSDWSRGRTLGTAPQSVPTPSRAQ) form a disordered region. Positions 1943-1955 (TAPQSVPTPSRAQ) are enriched in polar residues. N-linked (GlcNAc...) asparagine glycans are attached at residues asparagine 1958, asparagine 2095, asparagine 2121, asparagine 2177, asparagine 2186, asparagine 2249, asparagine 2276, asparagine 2313, asparagine 2368, and asparagine 2404. Asparagine 2575, asparagine 2647, asparagine 2701, asparagine 2761, and asparagine 2779 each carry an N-linked (GlcNAc...) asparagine glycan. Residues asparagine 2928, asparagine 2998, asparagine 3023, asparagine 3090, asparagine 3208, asparagine 3322, and asparagine 3411 are each glycosylated (N-linked (GlcNAc...) asparagine). Fibronectin type-III domains are found at residues 3395–3489 (CPAT…TRED), 3490–3580 (VPEG…TTQR), 3581–3671 (SPEN…TLQA), 3672–3766 (APQG…TPED), 3769–3857 (PPCN…TLEA), 3858–3955 (APVG…TLEA), 3956–4059 (PPRG…SAPS), 4060–4148 (GLMN…APPD), 4149–4256 (TQMA…APPD), 4257–4346 (GLSP…TPEV), 4347–4437 (PPSE…APPE), 4438–4522 (NMDP…TSPS), 4523–4625 (APSG…VPPL), 4628–4725 (PAPH…TGPA), 4726–4818 (PPEG…THPA), 4819–4921 (PPSG…TKKE), and 4922–5005 (MPQY…YDAA). N-linked (GlcNAc...) asparagine glycosylation is found at asparagine 3589, asparagine 3645, asparagine 3686, asparagine 3712, asparagine 3723, and asparagine 3772. N-linked (GlcNAc...) asparagine glycans are attached at residues asparagine 3976, asparagine 4063, asparagine 4194, asparagine 4218, asparagine 4304, asparagine 4340, asparagine 4365, and asparagine 4410. Residues asparagine 4556, asparagine 4575, asparagine 4683, asparagine 4716, asparagine 4746, asparagine 4756, asparagine 4765, asparagine 4915, and asparagine 4934 are each glycosylated (N-linked (GlcNAc...) asparagine). Residues 5034–5054 (FIMVMAVVGLILLAIFLSLIL) traverse the membrane as a helical segment. The Cytoplasmic segment spans residues 5055 to 5193 (QRKIHKEPCI…EHTAFTDTHL (139 aa)). The PDZ-binding signature appears at 5191–5193 (THL).

In terms of assembly, interacts with collagen IV and fibronectin via its laminin EGF-like domains. Interaction with collagen may be required for stable integration into the basement membrane. Interacts with NINL. Interacts with USH1C. Component of USH2 complex, composed of ADGRV1, PDZD7, USH2A and WHRN. Interacts with ADGRV1/MASS1 (via N-terminal PDZ domain). Interacts (via the cytoplasmic region) with WHRN. Interacts (via the cytoplasmic region) with PDZD7. Interacts (via the cytoplasmic region) with VEZT and MYO7A (via MyTH4-FERM domains); the interaction associates VEZT with the USH2 complex at the stereocilia base. As to expression, present in the testis, epididymis, oviduct, spleen, submaxillary gland, and small and large intestines. Not detected in the brain, skin, lung, skeletal muscle, cardiac muscle, liver or kidney. Expressed in smooth muscle of the colon and the epididymis. Also present in select vascular basement membranes. In the cochlea, it is present in virtually every basement membrane. It is particularly high in the strial capillary basement membranes (SCBMs). In the retina, it is again expressed in all of the basement membranes. It is also very prevalent in the lens capsule and the Bruch's layer between the retinal pigment epithelium and the choroid layer, which is very rich in basement membranes. In neonates in it is widely expressed in the basement membranes of the cochlea. Present in the synaptic terminals of retinal photoreceptors (at protein level).

It localises to the cell projection. It is found in the stereocilium membrane. Its subcellular location is the photoreceptor inner segment. The protein localises to the secreted. Involved in hearing and vision as member of the USH2 complex. In the inner ear, required for the maintenance of hair bundle ankle formation, which connects growing stereocilia in developing cochlear hair cells. In retina photoreceptors, the USH2 complex is required for the maintenance of periciliary membrane complex that seems to play a role in regulating intracellular protein transport. This Mus musculus (Mouse) protein is Usherin (Ush2A).